A 350-amino-acid chain; its full sequence is Phenylalanine--tRNA ligase alpha subunit (350 aa).

Residue glutamate 271 participates in Mg(2+) binding.

It belongs to the class-II aminoacyl-tRNA synthetase family. Phe-tRNA synthetase alpha subunit type 1 subfamily. In terms of assembly, tetramer of two alpha and two beta subunits. It depends on Mg(2+) as a cofactor.

Its subcellular location is the cytoplasm. It carries out the reaction tRNA(Phe) + L-phenylalanine + ATP = L-phenylalanyl-tRNA(Phe) + AMP + diphosphate + H(+). This chain is Phenylalanine--tRNA ligase alpha subunit, found in Acidovorax ebreus (strain TPSY) (Diaphorobacter sp. (strain TPSY)).